The following is a 543-amino-acid chain: Phosphoribosylaminoimidazole carboxylase (543 aa).

The region spanning 110–297 (KEHLIKNGIA…QFEAHVRAIT (188 aa)) is the ATP-grasp domain. ATP is bound at residue 137–192 (GAKYGFPYMLKSRTMAYDGRGNFVVKDKSYIPEALKVLDDRPLYAEKWAPFSKELA).

In the C-terminal section; belongs to the AIR carboxylase family. Class I subfamily.

It catalyses the reaction 5-amino-1-(5-phospho-D-ribosyl)imidazole-4-carboxylate + H(+) = 5-amino-1-(5-phospho-beta-D-ribosyl)imidazole + CO2. Its pathway is purine metabolism; IMP biosynthesis via de novo pathway; 5-amino-1-(5-phospho-D-ribosyl)imidazole-4-carboxylate from 5-amino-1-(5-phospho-D-ribosyl)imidazole (carboxylase route): step 1/1. The protein is Phosphoribosylaminoimidazole carboxylase (ADE1) of Ogataea methanolica (Yeast).